The sequence spans 552 residues: 3-hydroxy-3-methylglutaryl-coenzyme A reductase 1 (552 aa).

Low complexity-rich tracts occupy residues 79–99 (QHNQ…QQPQ) and 112–122 (QQQQQQQQQQQ). The interval 79-138 (QHNQQQQQKQQPSQDYIQQPQNDNNINSGKEQEQQQQQQQQQQQTPDITNQPTKTNKKIP) is disordered. A compositionally biased stretch (polar residues) spans 123–132 (TPDITNQPTK). Glu237 functions as the Charge relay system in the catalytic mechanism. The N-linked (GlcNAc...) asparagine glycan is linked to Asn288. The Charge relay system role is filled by Lys369. An N-linked (GlcNAc...) asparagine glycan is attached at Asn375. Asp445 acts as the Charge relay system in catalysis. The active-site Proton donor is the His543.

Belongs to the HMG-CoA reductase family.

The protein localises to the endoplasmic reticulum membrane. It catalyses the reaction (R)-mevalonate + 2 NADP(+) + CoA = (3S)-3-hydroxy-3-methylglutaryl-CoA + 2 NADPH + 2 H(+). It functions in the pathway metabolic intermediate biosynthesis; (R)-mevalonate biosynthesis; (R)-mevalonate from acetyl-CoA: step 3/3. Functionally, this transmembrane glycoprotein is involved in the control of cholesterol biosynthesis. It is the rate-limiting enzyme of the sterol biosynthesis. This is 3-hydroxy-3-methylglutaryl-coenzyme A reductase 1 (hmgA) from Dictyostelium discoideum (Social amoeba).